Reading from the N-terminus, the 553-residue chain is Glutamine--tRNA ligase (553 aa).

The 'HIGH' region signature appears at 34-44 (PEPNGYLHIGH). ATP is bound by residues 35-37 (EPN) and 41-47 (HIGHAKS). Residues aspartate 67 and tyrosine 212 each contribute to the L-glutamine site. ATP is bound by residues threonine 231, 261-262 (RL), and 269-271 (MSK). The short motif at 268–272 (IMSKR) is the 'KMSKS' region element.

This sequence belongs to the class-I aminoacyl-tRNA synthetase family. Monomer.

The protein resides in the cytoplasm. It carries out the reaction tRNA(Gln) + L-glutamine + ATP = L-glutaminyl-tRNA(Gln) + AMP + diphosphate. The chain is Glutamine--tRNA ligase from Tolumonas auensis (strain DSM 9187 / NBRC 110442 / TA 4).